A 1801-amino-acid polypeptide reads, in one-letter code: Laminin subunit beta-2 (1801 aa).

The first 35 residues, 1–35 (MEWASGKPGRGRQGQPVPWELRLGLLLSVLAATLA), serve as a signal peptide directing secretion. Residues 46-285 (SRGSCYPATG…ALYELVIRGN (240 aa)) form the Laminin N-terminal domain. N251 carries an N-linked (GlcNAc...) asparagine glycan. 19 cysteine pairs are disulfide-bonded: C286-C295, C288-C313, C315-C324, C327-C347, C350-C359, C352-C377, C380-C389, C392-C410, C413-C426, C415-C441, C443-C452, C455-C470, C473-C487, C475-C494, C496-C505, C508-C522, C525-C537, C527-C544, and C546-C555. Laminin EGF-like domains are found at residues 286–349 (CFCY…ACRK), 350–412 (CECN…ACRP), 413–472 (CDCD…GCQR), and 473–524 (CQCN…GCRP). The N-linked (GlcNAc...) asparagine glycan is linked to N371. The Laminin EGF-like 5; truncated domain occupies 525–555 (CDCDVGGALDPQCDEATGQCPCRPHMIGRRC). In terms of domain architecture, Laminin IV type B spans 564–780 (RPFLDHLTWE…LLISASSLVY (217 aa)). 32 disulfide bridges follow: C786-C798, C788-C805, C807-C816, C819-C831, C834-C846, C836-C853, C855-C864, C867-C877, C880-C889, C882-C896, C899-C908, C911-C927, C930-C946, C932-C957, C959-C968, C971-C986, C989-C1003, C991-C1010, C1013-C1022, C1025-C1038, C1041-C1061, C1043-C1068, C1070-C1079, C1082-C1095, C1098-C1110, C1100-C1117, C1119-C1128, C1131-C1143, C1146-C1158, C1148-C1165, C1167-C1176, and C1179-C1190. Laminin EGF-like domains follow at residues 786–833 (CQCD…GCQA), 834–879 (CQCS…NCRP), 880–929 (CVCN…QCRP), 930–988 (CPCP…RCQL), 989–1040 (CECS…SCHR), 1041–1097 (CTCN…GCQP), 1098–1145 (CACH…QCRA), and 1146–1192 (CDCD…ACHP). N1088 is a glycosylation site (N-linked (GlcNAc...) asparagine). The interval 1193–1412 (CHACFGDWDR…LSLTGVNELV (220 aa)) is domain II. N1252 carries an N-linked (GlcNAc...) asparagine glycan. A coiled-coil region spans residues 1259–1306 (AKLVEATEGLRHEIGKTTERLTQLEAELTDVQDENFNANHALSGLERD). 2 N-linked (GlcNAc...) asparagine glycosylation sites follow: N1311 and N1351. The domain alpha stretch occupies residues 1413–1445 (CGAPGDAPCATSPCGGAGCRDEDGQPRCGGLGC). The domain I stretch occupies residues 1446-1801 (SGAAATADLA…LQVQIYNTCQ (356 aa)). A coiled-coil region spans residues 1475 to 1529 (GILSRVSETRRQAEEAQQRAQAALDKANASRGQVEQANQELRELIQNVKDFLSQE). N1502 carries an N-linked (GlcNAc...) asparagine glycan. S1535 is modified (phosphoserine). The stretch at 1576–1793 (LAHTMGDVRR…RSVLQAINLQ (218 aa)) forms a coiled coil. Residues 1684 to 1694 (ASTAEETAGSA) show a composition bias toward low complexity. Residues 1684-1703 (ASTAEETAGSAQSRAREAEK) are disordered.

As to quaternary structure, laminin is a complex glycoprotein, consisting of three different polypeptide chains (alpha, beta, gamma), which are bound to each other by disulfide bonds into a cross-shaped molecule comprising one long and three short arms with globules at each end. Beta-2 is a subunit of laminin-3 (laminin-121 or S-laminin), laminin-4 (laminin-221 or S-merosin), laminin-7 (laminin-321 or KS-laminin), laminin-9 (laminin-421), laminin-11 (laminin-521), laminin-14 (laminin-423) and laminin-15 (laminin-523). In terms of tissue distribution, found in the basement membranes (major component). S-laminin is concentrated in the synaptic cleft of the neuromuscular junction.

The protein resides in the secreted. Its subcellular location is the extracellular space. It localises to the extracellular matrix. It is found in the basement membrane. Its function is as follows. Binding to cells via a high affinity receptor, laminin is thought to mediate the attachment, migration and organization of cells into tissues during embryonic development by interacting with other extracellular matrix components. The polypeptide is Laminin subunit beta-2 (Lamb2) (Rattus norvegicus (Rat)).